The chain runs to 216 residues: Thiamine-phosphate synthase (216 aa).

Residues 41–45 (QLREK) and D77 each bind 4-amino-2-methyl-5-(diphosphooxymethyl)pyrimidine. Mg(2+) is bound by residues D78 and D97. S116 contributes to the 4-amino-2-methyl-5-(diphosphooxymethyl)pyrimidine binding site. 2-[(2R,5Z)-2-carboxy-4-methylthiazol-5(2H)-ylidene]ethyl phosphate is bound at residue 143–145 (TTS). K146 is a binding site for 4-amino-2-methyl-5-(diphosphooxymethyl)pyrimidine. 2-[(2R,5Z)-2-carboxy-4-methylthiazol-5(2H)-ylidene]ethyl phosphate-binding positions include G174 and 194-195 (IS).

The protein belongs to the thiamine-phosphate synthase family. Mg(2+) is required as a cofactor.

The catalysed reaction is 2-[(2R,5Z)-2-carboxy-4-methylthiazol-5(2H)-ylidene]ethyl phosphate + 4-amino-2-methyl-5-(diphosphooxymethyl)pyrimidine + 2 H(+) = thiamine phosphate + CO2 + diphosphate. The enzyme catalyses 2-(2-carboxy-4-methylthiazol-5-yl)ethyl phosphate + 4-amino-2-methyl-5-(diphosphooxymethyl)pyrimidine + 2 H(+) = thiamine phosphate + CO2 + diphosphate. It catalyses the reaction 4-methyl-5-(2-phosphooxyethyl)-thiazole + 4-amino-2-methyl-5-(diphosphooxymethyl)pyrimidine + H(+) = thiamine phosphate + diphosphate. Its pathway is cofactor biosynthesis; thiamine diphosphate biosynthesis; thiamine phosphate from 4-amino-2-methyl-5-diphosphomethylpyrimidine and 4-methyl-5-(2-phosphoethyl)-thiazole: step 1/1. In terms of biological role, condenses 4-methyl-5-(beta-hydroxyethyl)thiazole monophosphate (THZ-P) and 2-methyl-4-amino-5-hydroxymethyl pyrimidine pyrophosphate (HMP-PP) to form thiamine monophosphate (TMP). The chain is Thiamine-phosphate synthase from Pediococcus pentosaceus (strain ATCC 25745 / CCUG 21536 / LMG 10740 / 183-1w).